We begin with the raw amino-acid sequence, 486 residues long: Glutamyl-tRNA(Gln) amidotransferase subunit A (486 aa).

Residues Lys-79 and Ser-154 each act as charge relay system in the active site. Residue Ser-178 is the Acyl-ester intermediate of the active site.

It belongs to the amidase family. GatA subfamily. In terms of assembly, heterotrimer of A, B and C subunits.

It catalyses the reaction L-glutamyl-tRNA(Gln) + L-glutamine + ATP + H2O = L-glutaminyl-tRNA(Gln) + L-glutamate + ADP + phosphate + H(+). Allows the formation of correctly charged Gln-tRNA(Gln) through the transamidation of misacylated Glu-tRNA(Gln) in organisms which lack glutaminyl-tRNA synthetase. The reaction takes place in the presence of glutamine and ATP through an activated gamma-phospho-Glu-tRNA(Gln). The sequence is that of Glutamyl-tRNA(Gln) amidotransferase subunit A from Dehalococcoides mccartyi (strain ATCC BAA-2266 / KCTC 15142 / 195) (Dehalococcoides ethenogenes (strain 195)).